The primary structure comprises 586 residues: MTKTSKLDALRAATSREDLAKILDVKLVFLTNVLYRIGSDNQYTQFTIPKKGKGVRTISAPTDRLKDIQRRICDLLSDCRDEIFAIRKISNNYSFGFERGKSIILNAYKHRGKQIILNIDLKDFFESFNFGRVRGYFLSNQDFLLNPVVATTLAKAACYNGTLPQGSPCSPIISNLICNIMDMRLAKLAKKYGCTYSRYADDITISTNKNTFPLEMATVQPEGVVLGKVLVKEIENSGFEINDSKTRLTYKTSRQEVTGLTVNRIVNIDRCYYKKTRALAHALYRTGEYKVPDENGVLVSGGLDKLEGMFGFIDQVDKFNNIKKKLNKQPDRYVLTNATLHGFKLKLNAREKAYSKFIYYKFFHGNTCPTIITEGKTDRIYLKAALHSLETSYPELFREKTDSKKKEINLNIFKSNEKTKYFLDLSGGTADLKKFVERYKNNYASYYGSVPKQPVIMVLDNDTGPSDLLNFLRNKVKSCPDDVTEMRKMKYIHVFYNLYIVLTPLSPSGEQTSMEDLFPKDILDIKIDGKKFNKNNDGDSKTEYGKHIFSMRVVRDKKRKIDFKAFCCIFDAIKDIKEHYKLMLNS.

One can recognise a Reverse transcriptase domain in the interval 29–262 (FLTNVLYRIG…SRQEVTGLTV (234 aa)). Positions 120, 201, and 202 each coordinate Mg(2+).

Belongs to the bacterial reverse transcriptase family.

The enzyme catalyses DNA(n) + a 2'-deoxyribonucleoside 5'-triphosphate = DNA(n+1) + diphosphate. The catalysed reaction is Endonucleolytic cleavage to 5'-phosphomonoester.. Its function is as follows. Reverse transcriptase (RT) component of antiviral defense system retron Ec67, minimally composed of a non-coding RNA (ncRNA) and this RT. Expression of these 2 elements confers protection against bacteriophage T5. At multiplicity of infection (MOI) of 0.02 cultures grow normally when infected with T5 without collapsing, at MOI 2 cultures enter growth stasis. Responsible for synthesis of msDNA-Ec67 (a branched molecule with RNA linked by a 2',5'-phosphodiester bond to ssDNA). The retron transcript serves as primer (from a conserved internal G residue) and template for the reaction, and codes for the RT. Can use other retrons as substrate (msDNA-Mx162 and msDNA-Ec86). Also able to synthesize DNA from a DNA template at least in vitro, although the enzyme is less active with a DNA template. In Escherichia coli, this protein is Retron Ec67 protein.